The sequence spans 388 residues: Succinate--CoA ligase [ADP-forming] subunit beta (388 aa).

In terms of domain architecture, ATP-grasp spans 9 to 244 (KEILRKFGVA…LDEEDPAEIE (236 aa)). Residues K46, 53–55 (GRG), E99, A102, and E107 each bind ATP. The Mg(2+) site is built by N199 and D213. Residues N264 and 321-323 (GIM) each bind substrate.

The protein belongs to the succinate/malate CoA ligase beta subunit family. As to quaternary structure, heterotetramer of two alpha and two beta subunits. Requires Mg(2+) as cofactor.

It carries out the reaction succinate + ATP + CoA = succinyl-CoA + ADP + phosphate. The catalysed reaction is GTP + succinate + CoA = succinyl-CoA + GDP + phosphate. It functions in the pathway carbohydrate metabolism; tricarboxylic acid cycle; succinate from succinyl-CoA (ligase route): step 1/1. Succinyl-CoA synthetase functions in the citric acid cycle (TCA), coupling the hydrolysis of succinyl-CoA to the synthesis of either ATP or GTP and thus represents the only step of substrate-level phosphorylation in the TCA. The beta subunit provides nucleotide specificity of the enzyme and binds the substrate succinate, while the binding sites for coenzyme A and phosphate are found in the alpha subunit. The protein is Succinate--CoA ligase [ADP-forming] subunit beta of Burkholderia multivorans (strain ATCC 17616 / 249).